Here is a 557-residue protein sequence, read N- to C-terminus: 2-isopropylmalate synthase (557 aa).

The Pyruvate carboxyltransferase domain occupies 33–307 (PIWCSSDLRD…DPQLDFSDID (275 aa)). Residues Asp-42, His-246, His-248, and Asn-282 each coordinate Mg(2+). The tract at residues 439 to 557 (ANSPYALVSH…SLSQQEAKAA (119 aa)) is regulatory domain.

Belongs to the alpha-IPM synthase/homocitrate synthase family. LeuA type 2 subfamily. Homodimer. Mg(2+) serves as cofactor.

It is found in the cytoplasm. The enzyme catalyses 3-methyl-2-oxobutanoate + acetyl-CoA + H2O = (2S)-2-isopropylmalate + CoA + H(+). It functions in the pathway amino-acid biosynthesis; L-leucine biosynthesis; L-leucine from 3-methyl-2-oxobutanoate: step 1/4. Its function is as follows. Catalyzes the condensation of the acetyl group of acetyl-CoA with 3-methyl-2-oxobutanoate (2-ketoisovalerate) to form 3-carboxy-3-hydroxy-4-methylpentanoate (2-isopropylmalate). In Pseudomonas putida (strain W619), this protein is 2-isopropylmalate synthase.